Reading from the N-terminus, the 255-residue chain is Pyrroloquinoline-quinone synthase (255 aa).

It belongs to the PqqC family.

The enzyme catalyses 6-(2-amino-2-carboxyethyl)-7,8-dioxo-1,2,3,4,7,8-hexahydroquinoline-2,4-dicarboxylate + 3 O2 = pyrroloquinoline quinone + 2 H2O2 + 2 H2O + H(+). The protein operates within cofactor biosynthesis; pyrroloquinoline quinone biosynthesis. Functionally, ring cyclization and eight-electron oxidation of 3a-(2-amino-2-carboxyethyl)-4,5-dioxo-4,5,6,7,8,9-hexahydroquinoline-7,9-dicarboxylic-acid to PQQ. This Cereibacter sphaeroides (strain ATCC 17025 / ATH 2.4.3) (Rhodobacter sphaeroides) protein is Pyrroloquinoline-quinone synthase.